Reading from the N-terminus, the 204-residue chain is Ribosome maturation factor RimP (204 aa).

This sequence belongs to the RimP family.

It is found in the cytoplasm. Functionally, required for maturation of 30S ribosomal subunits. This Albidiferax ferrireducens (strain ATCC BAA-621 / DSM 15236 / T118) (Rhodoferax ferrireducens) protein is Ribosome maturation factor RimP.